Consider the following 219-residue polypeptide: Ribose-5-phosphate isomerase A (219 aa).

Substrate contacts are provided by residues 28 to 31 (SGST), 81 to 84 (DGAD), and 94 to 97 (KGGG). Glu103 (proton acceptor) is an active-site residue. Lys121 is a binding site for substrate.

This sequence belongs to the ribose 5-phosphate isomerase family. In terms of assembly, homodimer.

The enzyme catalyses aldehydo-D-ribose 5-phosphate = D-ribulose 5-phosphate. Its pathway is carbohydrate degradation; pentose phosphate pathway; D-ribose 5-phosphate from D-ribulose 5-phosphate (non-oxidative stage): step 1/1. Catalyzes the reversible conversion of ribose-5-phosphate to ribulose 5-phosphate. The sequence is that of Ribose-5-phosphate isomerase A from Haemophilus influenzae (strain 86-028NP).